Reading from the N-terminus, the 611-residue chain is Lanthanide-dependent methanol dehydrogenase (611 aa).

Positions 1-34 (MTVKLKKPKKYAVAKNATLLAAFGLIGSLSLAKA) are cleaved as a signal peptide. The cysteines at positions 138 and 139 are disulfide-linked. Pyrroloquinoline quinone-binding residues include R144, T188, S203, G204, and G205. E206 contacts Ce(3+). E206 contributes to the Eu(3+) binding site. Residues T270 and W272 each contribute to the pyrroloquinoline quinone site. The Ce(3+) site is built by N290, D333, and D335. The Eu(3+) site is built by N290, D333, and D335. A pyrroloquinoline quinone-binding site is contributed by R360. C414 and C443 form a disulfide bridge. Positions 501 and 566 each coordinate pyrroloquinoline quinone.

This sequence belongs to the bacterial PQQ dehydrogenase family. Homodimer. Requires Ce(3+) as cofactor. La(3+) serves as cofactor. The cofactor is Nd(3+). It depends on Pr(3+) as a cofactor. Eu(3+) is required as a cofactor. Requires pyrroloquinoline quinone as cofactor.

The protein resides in the periplasm. The enzyme catalyses 2 Fe(III)-[cytochrome cL] + methanol = 2 Fe(II)-[cytochrome cL] + formaldehyde + 2 H(+). It catalyses the reaction 4 Fe(III)-[cytochrome cL] + methanol + H2O = 4 Fe(II)-[cytochrome cL] + formate + 5 H(+). It carries out the reaction 2 Fe(III)-[cytochrome cL] + a primary alcohol = 2 Fe(II)-[cytochrome cL] + an aldehyde + 2 H(+). The protein operates within one-carbon metabolism; methanol degradation. Its function is as follows. Catalyzes the oxidation of methanol to formaldehyde or formate in the presence of lanthanides (Ln). Is a key enzyme in methane/methanol metabolism, allowing M.fumariolicum to grow on methane as the sole carbon and energy source. Can also act on other primary alcohols in vitro, such as ethanol, 1-propanol, 1-butanol, and 1-hexanol, but is not able to oxidize secondary alcohols and acetaldehyde. Uses a specific cytochrome cL, encoded by the adjacent gene in the locus, as electron acceptor. The polypeptide is Lanthanide-dependent methanol dehydrogenase (Methylacidiphilum fumariolicum (strain SolV)).